The primary structure comprises 439 residues: Histone acetyltransferase GCN5 (439 aa).

Composition is skewed to basic and acidic residues over residues 1 to 28 (MVTK…KLEN) and 39 to 59 (ETNK…KETE). The segment at 1 to 59 (MVTKHQIEEDHLDGATTDPEVKRVKLENNVEEIQPEQAETNKQEGTDKENKGKFEKETE) is disordered. The N-acetyltransferase domain maps to 100–255 (IEFRVVNNDN…GGTLMQCSML (156 aa)). Glu-173 (proton donor/acceptor) is an active-site residue. Residues 177 to 179 (CAI), 184 to 190 (QVRGYGA), and 216 to 219 (YAIG) each bind acetyl-CoA. Residues 327–431 (PKRGPHDAAI…KFFNNKVKEI (105 aa)) enclose the Bromo domain.

It belongs to the acetyltransferase family. GCN5 subfamily. Component of the 1.8 MDa SAGA (Spt-Ada-Gcn5 acetyltransferase) complex, which is composed of 19 subunits TRA1, SPT7, TAF5, NGG1/ADA3, SGF73, SPT20/ADA5, SPT8, TAF12, TAF6, HFI1/ADA1, UBP8, GCN5, ADA2, SPT3, SGF29, TAF10, TAF9, SGF11 and SUS1. The SAGA complex is composed of 4 modules, namely the HAT (histone acetyltransferase) module (GCN5, ADA2, NGG1/ADA3 and SGF29), the DUB (deubiquitinating) module (UBP8, SGF11, SGF73 and SUS1), the core or TAF (TBP-associated factor) module (TAF5, TAF6, TAF9, TAF10 and TAF12), and the Tra1 or SPT (Suppressor of Ty) module (TRA1, HFI1/ADA1, SPT3, SPT7, SPT8 and SPT20/ADA5). The Tra1/SPT module binds activators, the core module recruits TBP (TATA-binding protein), the HAT module contains the histone H3 acetyltransferase GCN5, and the DUB module comprises the histone H2B deubiquitinase UBP8. Also identified in an altered form of SAGA, named SALSA (SAGA altered, Spt8 absent) or SLIK (SAGA-like) complex, which contains a C-terminal truncated form of SPT7 and is missing SPT8. However, it has been shown that the SAGA and SAGA-like SALSA/SLIK transcriptional coactivators are structurally and biochemically equivalent. Component of the 0.8 MDa ADA complex, a HAT complex distinct from SAGA, which at least consists of ADA2, NGG1/ADA3, AHC1, AHC2, SGF29 and GCN5. Component of an ADA/GCN5 complex that consists of HFI1/ADA1, ADA2, NGG1/ADA3, SPT20/ADA5 and GCN5 and probably is a subcomplex of SAGA.

The protein localises to the nucleus. Its subcellular location is the cytoplasm. The enzyme catalyses L-lysyl-[protein] + acetyl-CoA = N(6)-acetyl-L-lysyl-[protein] + CoA + H(+). It catalyses the reaction (2E)-butenoyl-CoA + L-lysyl-[protein] = N(6)-(2E)-butenoyl-L-lysyl-[protein] + CoA + H(+). Its function is as follows. Histone acetyltransferase that acetylates histone H2B to form H2BK11ac and H2BK16ac, histone H3 to form H3K9ac, H3K14ac, H3K18ac, H3K23ac, H3K27ac and H3K36ac, with a lower preference histone H4 to form H4K8ac and H4K16ac, and contributes to H2A.Z acetylation. Acetylation of histones gives a specific tag for epigenetic transcription activation and elongation. Operates in concert with certain DNA-binding transcriptional activators such as GCN4 or HAP2/3/4. Its acetyltransferase activity seems to be dependent on the association in different multisubunit complexes. Component of the transcription coactivator SAGA complex. SAGA acts as a general cofactor required for essentially all RNA polymerase II transcription. At the promoters, SAGA is required for transcription pre-initiation complex (PIC) recruitment. It influences RNA polymerase II transcriptional activity through different activities such as TBP interaction (via core/TAF module) and promoter selectivity, interaction with transcription activators (via Tra1/SPT module), and chromatin modification through histone acetylation (via HAT module) and deubiquitination (via DUB module). SAGA preferentially acetylates histones H3 (to form H3K9ac, H3K14ac, H3K18ac and H3K23ac) and H2B and deubiquitinates histone H2B. SAGA interacts with DNA via upstream activating sequences (UASs). Also identified in a modified version of SAGA named SALSA or SLIK. The cleavage of SPT7 and the absence of the SPT8 subunit in SLIK neither drive any major conformational differences in its structure compared with SAGA, nor significantly affect HAT, DUB, or DNA-binding activities. Component of the ADA histone acetyltransferase complex, which preferentially acetylates nucleosomal histones H3 (to form H3K14ac and H3K18ac) and H2B. In addition to histone acetyltransferase, can use different acyl-CoA substrates, such as (2E)-butenoyl-CoA (crotonyl-CoA) and is able to mediate histone crotonylation. Controls the metaphase-to-anaphase transition and is required for correct chromosome segregation and centromere/kinetochore function in mitosis. May be involved in response to DNA damage by genotoxic agents. This Saccharomyces cerevisiae (strain ATCC 204508 / S288c) (Baker's yeast) protein is Histone acetyltransferase GCN5.